Reading from the N-terminus, the 470-residue chain is Uronate isomerase (470 aa).

It belongs to the metallo-dependent hydrolases superfamily. Uronate isomerase family.

It carries out the reaction D-glucuronate = D-fructuronate. It catalyses the reaction aldehydo-D-galacturonate = keto-D-tagaturonate. Its pathway is carbohydrate metabolism; pentose and glucuronate interconversion. The sequence is that of Uronate isomerase from Klebsiella pneumoniae (strain 342).